The primary structure comprises 429 residues: Melanoma-associated antigen 11 (429 aa).

Disordered stretches follow at residues 1-30 (METQ…GDFG) and 188-215 (IFGS…IDPE). Residues 194–209 (DEGSGSQEKEGPSTSP) are compositionally biased toward polar residues. The 200-residue stretch at 222–421 (LHDKIIDLVH…TSYPSLYEDA (200 aa)) folds into the MAGE domain.

In terms of tissue distribution, expressed in tumors of several types, such as melanoma, head and neck squamous cell carcinoma, lung carcinoma and breast carcinoma. Expressed in testis, ovary, prostate, cancerous prostate, breast and adrenal tissue.

The protein resides in the nucleus. The protein localises to the cytoplasm. Acts as androgen receptor coregulator that increases androgen receptor activity by modulating the receptors interdomain interaction. May play a role in embryonal development and tumor transformation or aspects of tumor progression. The polypeptide is Melanoma-associated antigen 11 (Homo sapiens (Human)).